Reading from the N-terminus, the 187-residue chain is MSVVPLMFRDWWDELDFPMRTSRLLDQHFGQGLKRDDLMSSVWNSRPTVLRSGYLRPWHTNSLQKQESGSTLNIDSEKFEVILDVQQFSPSEITVKVADKFVIVEGKHEEKQDEHGYVSRQFSRRYQLPSDVNPDTVTSSLSSDGLLTIKAPMKALPPPQTERLVQITQTGPSSKEDNAKKVETSTA.

The 110-residue stretch at 61–170 (NSLQKQESGS…TERLVQITQT (110 aa)) folds into the sHSP domain. The disordered stretch occupies residues 151 to 187 (APMKALPPPQTERLVQITQTGPSSKEDNAKKVETSTA). Basic and acidic residues predominate over residues 174–187 (SKEDNAKKVETSTA).

The protein belongs to the small heat shock protein (HSP20) family. Ubiquitously expressed during embryogenesis with no sign of tissue specificity in expression up to stage 16.

Functionally, vital role in embryonic development. This Drosophila melanogaster (Fruit fly) protein is Protein lethal(2)essential for life (l(2)efl).